We begin with the raw amino-acid sequence, 433 residues long: 3-phosphoshikimate 1-carboxyvinyltransferase (433 aa).

The 3-phosphoshikimate site is built by Lys21, Ser22, and Arg26. Residue Lys21 coordinates phosphoenolpyruvate. Phosphoenolpyruvate is bound by residues Gly96 and Arg124. The 3-phosphoshikimate site is built by Ser167, Ser168, Gln169, Ser195, Asp310, and Lys337. Gln169 contacts phosphoenolpyruvate. The active-site Proton acceptor is Asp310. Residues Arg341, Arg384, and Lys410 each contribute to the phosphoenolpyruvate site.

Belongs to the EPSP synthase family. Monomer.

The protein resides in the cytoplasm. The enzyme catalyses 3-phosphoshikimate + phosphoenolpyruvate = 5-O-(1-carboxyvinyl)-3-phosphoshikimate + phosphate. Its pathway is metabolic intermediate biosynthesis; chorismate biosynthesis; chorismate from D-erythrose 4-phosphate and phosphoenolpyruvate: step 6/7. In terms of biological role, catalyzes the transfer of the enolpyruvyl moiety of phosphoenolpyruvate (PEP) to the 5-hydroxyl of shikimate-3-phosphate (S3P) to produce enolpyruvyl shikimate-3-phosphate and inorganic phosphate. The polypeptide is 3-phosphoshikimate 1-carboxyvinyltransferase (Clostridium botulinum (strain Eklund 17B / Type B)).